An 802-amino-acid polypeptide reads, in one-letter code: Chondroitin sulfate synthase 1 (802 aa).

Residues 1–7 lie on the Cytoplasmic side of the membrane; that stretch reads MAARGRR. Residues 8 to 28 traverse the membrane as a helical; Signal-anchor for type II membrane protein segment; it reads AWLSVLLGLVLGFVLASRLVL. Residues 29 to 802 lie on the Lumenal side of the membrane; sequence PRASELKRAG…SNNNGSVRTA (774 aa). The disordered stretch occupies residues 34–82; it reads LKRAGPRRRASPEGCRSGQAAASQAGGARGDARGAQLWPPGSDPDGGPR. Low complexity-rich tracts occupy residues 49–59 and 66–78; these read RSGQAAASQAG and RGAQ…SDPD. N189 and N623 each carry an N-linked (GlcNAc...) asparagine glycan. Residues D633 and H747 each coordinate a divalent metal cation. N796 is a glycosylation site (N-linked (GlcNAc...) asparagine).

It belongs to the chondroitin N-acetylgalactosaminyltransferase family. Requires Co(2+) as cofactor. It depends on Mn(2+) as a cofactor. Cd(2+) is required as a cofactor. In terms of tissue distribution, ubiquitous, with the highest levels in placenta. Detected at low levels in brain, heart, skeletal muscle, colon, thymus, spleen, kidney, liver, adrenal gland, mammary gland, stomach, small intestine, lung and peripheral blood leukocytes.

Its subcellular location is the golgi apparatus. It is found in the golgi stack membrane. The protein resides in the secreted. The catalysed reaction is 3-O-(beta-D-GlcA-(1-&gt;3)-beta-D-GalNAc-(1-&gt;4)-beta-D-GlcA-(1-&gt;3)-beta-D-Gal-(1-&gt;3)-beta-D-Gal-(1-&gt;4)-beta-D-Xyl)-L-seryl-[protein] + UDP-N-acetyl-alpha-D-galactosamine = 3-O-(beta-D-GalNAc-(1-&gt;4)-beta-D-GlcA-(1-&gt;3)-beta-D-GalNAc-(1-&gt;4)-beta-D-GlcA-(1-&gt;3)-beta-D-Gal-(1-&gt;3)-beta-D-Gal-(1-&gt;4)-beta-D-Xyl)-L-seryl-[protein] + UDP + H(+). It carries out the reaction 3-O-{beta-D-GlcA-(1-&gt;3)-[beta-D-GalNAc-(1-&gt;4)-beta-D-GlcA-(1-&gt;3)](n)-beta-D-GalNAc-(1-&gt;4)-beta-D-GlcA-(1-&gt;3)-beta-D-Gal-(1-&gt;3)-beta-D-Gal-(1-&gt;4)-beta-D-Xyl}-L-seryl-[protein] + UDP-N-acetyl-alpha-D-galactosamine = 3-O-{[beta-D-GalNAc-(1-&gt;4)-beta-D-GlcA-(1-&gt;3)](n+1)-beta-D-GalNAc-(1-&gt;4)-beta-D-GlcA-(1-&gt;3)-beta-D-Gal-(1-&gt;3)-beta-D-Gal-(1-&gt;4)-beta-D-Xyl}-L-seryl-[protein] + UDP + H(+). The enzyme catalyses 3-O-(beta-D-GalNAc-(1-&gt;4)-beta-D-GlcA-(1-&gt;3)-beta-D-Gal-(1-&gt;3)-beta-D-Gal-(1-&gt;4)-beta-D-Xyl)-L-seryl-[protein] + UDP-alpha-D-glucuronate = 3-O-(beta-D-GlcA-(1-&gt;3)-beta-D-GalNAc-(1-&gt;4)-beta-D-GlcA-(1-&gt;3)-beta-D-Gal-(1-&gt;3)-beta-D-Gal-(1-&gt;4)-beta-D-Xyl)-L-seryl-[protein] + UDP + H(+). It catalyses the reaction 3-O-{[beta-D-GalNAc-(1-&gt;4)-beta-D-GlcA-(1-&gt;3)](n)-beta-D-GalNAc-(1-&gt;4)-beta-D-GlcA-(1-&gt;3)-beta-D-Gal-(1-&gt;3)-beta-D-Gal-(1-&gt;4)-beta-D-Xyl}-L-seryl-[protein] + UDP-alpha-D-glucuronate = 3-O-{beta-D-GlcA-(1-&gt;3)-[beta-D-GalNAc-(1-&gt;4)-beta-D-GlcA-(1-&gt;3)](n)-beta-D-GalNAc-(1-&gt;4)-beta-D-GlcA-(1-&gt;3)-beta-D-Gal-(1-&gt;3)-beta-D-Gal-(1-&gt;4)-beta-D-Xyl}-L-seryl-[protein] + UDP + H(+). In terms of biological role, has both beta-1,3-glucuronic acid and beta-1,4-N-acetylgalactosamine transferase activity. Transfers glucuronic acid (GlcUA) from UDP-GlcUA and N-acetylgalactosamine (GalNAc) from UDP-GalNAc to the non-reducing end of the elongating chondroitin polymer. Involved in the negative control of osteogenesis likely through the modulation of NOTCH signaling. This Homo sapiens (Human) protein is Chondroitin sulfate synthase 1.